The sequence spans 224 residues: Large ribosomal subunit protein uL3 (224 aa).

The segment at 132–153 (SQTKTHGTHEYQRHPGAIGQRK) is disordered.

It belongs to the universal ribosomal protein uL3 family. As to quaternary structure, part of the 50S ribosomal subunit. Forms a cluster with proteins L14 and L19.

One of the primary rRNA binding proteins, it binds directly near the 3'-end of the 23S rRNA, where it nucleates assembly of the 50S subunit. This chain is Large ribosomal subunit protein uL3, found in Myxococcus xanthus (strain DK1622).